We begin with the raw amino-acid sequence, 345 residues long: Phosphoribosylformylglycinamidine cyclo-ligase (345 aa).

It belongs to the AIR synthase family.

It is found in the cytoplasm. The catalysed reaction is 2-formamido-N(1)-(5-O-phospho-beta-D-ribosyl)acetamidine + ATP = 5-amino-1-(5-phospho-beta-D-ribosyl)imidazole + ADP + phosphate + H(+). It functions in the pathway purine metabolism; IMP biosynthesis via de novo pathway; 5-amino-1-(5-phospho-D-ribosyl)imidazole from N(2)-formyl-N(1)-(5-phospho-D-ribosyl)glycinamide: step 2/2. The protein is Phosphoribosylformylglycinamidine cyclo-ligase of Shouchella clausii (strain KSM-K16) (Alkalihalobacillus clausii).